A 31-amino-acid chain; its full sequence is Cytochrome b6-f complex subunit 6 (31 aa).

The helical transmembrane segment at 3–23 threads the bilayer; it reads ILIGYIILLACAFGLAAGLFF.

The protein belongs to the PetL family. In terms of assembly, the 4 large subunits of the cytochrome b6-f complex are cytochrome b6, subunit IV (17 kDa polypeptide, PetD), cytochrome f and the Rieske protein, while the 4 small subunits are PetG, PetL, PetM and PetN. The complex functions as a dimer.

The protein resides in the plastid. The protein localises to the chloroplast thylakoid membrane. Component of the cytochrome b6-f complex, which mediates electron transfer between photosystem II (PSII) and photosystem I (PSI), cyclic electron flow around PSI, and state transitions. PetL is important for photoautotrophic growth as well as for electron transfer efficiency and stability of the cytochrome b6-f complex. The protein is Cytochrome b6-f complex subunit 6 of Rhodomonas salina (Cryptomonas salina).